A 1162-amino-acid chain; its full sequence is DNA-directed RNA polymerase subunit beta (1162 aa).

Belongs to the RNA polymerase beta chain family. In terms of assembly, the RNAP catalytic core consists of 2 alpha, 1 beta, 1 beta' and 1 omega subunit. When a sigma factor is associated with the core the holoenzyme is formed, which can initiate transcription.

The catalysed reaction is RNA(n) + a ribonucleoside 5'-triphosphate = RNA(n+1) + diphosphate. In terms of biological role, DNA-dependent RNA polymerase catalyzes the transcription of DNA into RNA using the four ribonucleoside triphosphates as substrates. In Clavibacter sepedonicus (Clavibacter michiganensis subsp. sepedonicus), this protein is DNA-directed RNA polymerase subunit beta.